Reading from the N-terminus, the 181-residue chain is ATP-dependent protease subunit ClpQ (181 aa).

Residue Ser-2 is part of the active site. Gly-165, Cys-168, and Thr-171 together coordinate Na(+).

In terms of assembly, a double ring-shaped homohexamer of ClpQ is capped on each side by a ring-shaped ClpY homohexamer. The assembly of the ClpQ/ClpY complex is dependent on binding of ATP.

The protein localises to the cytoplasm. Functionally, protease subunit of a proteasome-like degradation complex. The polypeptide is ATP-dependent protease subunit ClpQ (clpQ) (Bacillus subtilis (strain 168)).